Reading from the N-terminus, the 544-residue chain is Chaperonin GroEL (544 aa).

ATP contacts are provided by residues 29–32 (TLGP), 86–90 (DGTTT), G413, 476–478 (NAA), and D492. The disordered stretch occupies residues 522-544 (PDPNANNNAAAGANPAAGMGGMM). A compositionally biased stretch (low complexity) spans 524–538 (PNANNNAAAGANPAA).

The protein belongs to the chaperonin (HSP60) family. Forms a cylinder of 14 subunits composed of two heptameric rings stacked back-to-back. Interacts with the co-chaperonin GroES.

Its subcellular location is the cytoplasm. The catalysed reaction is ATP + H2O + a folded polypeptide = ADP + phosphate + an unfolded polypeptide.. Together with its co-chaperonin GroES, plays an essential role in assisting protein folding. The GroEL-GroES system forms a nano-cage that allows encapsulation of the non-native substrate proteins and provides a physical environment optimized to promote and accelerate protein folding. This chain is Chaperonin GroEL, found in Lacticaseibacillus casei (strain BL23) (Lactobacillus casei).